The primary structure comprises 115 residues: Tyrosine-protein phosphatase 23 (115 aa).

In terms of domain architecture, Tyrosine-protein phosphatase spans 1–115; sequence WMMIVEQKCR…EIGGDAPMVV (115 aa). Residue Asp83 coordinates substrate.

The protein belongs to the protein-tyrosine phosphatase family.

The enzyme catalyses O-phospho-L-tyrosyl-[protein] + H2O = L-tyrosyl-[protein] + phosphate. In Styela plicata (Wrinkled sea squirt), this protein is Tyrosine-protein phosphatase 23 (STY-23).